The primary structure comprises 261 residues: uncharacterized protein (261 aa).

The signal sequence occupies residues 1–22 (MRDSKRVVLYISIIVLSIFIIG). The N-palmitoyl cysteine moiety is linked to residue cysteine 23. Residue cysteine 23 is the site of S-diacylglycerol cysteine attachment.

The protein belongs to the staphylococcal tandem lipoprotein family.

The protein resides in the cell membrane. This is an uncharacterized protein from Staphylococcus aureus (strain Mu50 / ATCC 700699).